Consider the following 202-residue polypeptide: MDMSLLSFHSEGKIEAGLDEAGRGCMAGPVVAAAVILPPNYKHSLLNDSKKLTIKQRELLRQDIIRDALDYHVAEVSHTVIDQINILNATMKAMHKAVKGLKKQQPNLLLIDGNRFKQYTGIEHVCIVQGDGLYLSIAAASVLAKTHRDSLMERLAKEHPEYGWDVNAGYATEKHRLAMETHGLTPYHRTSFHFKPKQLDLF.

The RNase H type-2 domain occupies 13–202 (KIEAGLDEAG…HFKPKQLDLF (190 aa)). 3 residues coordinate a divalent metal cation: aspartate 19, glutamate 20, and aspartate 112.

This sequence belongs to the RNase HII family. It depends on Mn(2+) as a cofactor. Mg(2+) serves as cofactor.

The protein resides in the cytoplasm. The enzyme catalyses Endonucleolytic cleavage to 5'-phosphomonoester.. In terms of biological role, endonuclease that specifically degrades the RNA of RNA-DNA hybrids. This chain is Ribonuclease HII, found in Cytophaga hutchinsonii (strain ATCC 33406 / DSM 1761 / CIP 103989 / NBRC 15051 / NCIMB 9469 / D465).